The sequence spans 256 residues: Inner membrane transport permease YadH (256 aa).

Topologically, residues 1 to 22 (MMHLYWVALKSIWAKEIHRFMR) are periplasmic. The ABC transmembrane type-2 domain maps to 22 to 251 (RIWVQTLVPP…LICWSLIQRG (230 aa)). Residues 23-43 (IWVQTLVPPVITMTLYFIIFG) traverse the membrane as a helical segment. At 44-52 (NLIGSRIGD) the chain is on the cytoplasmic side. Residues 53 to 73 (MHGFSYMQFIVPGLIMMSVIT) traverse the membrane as a helical segment. Over 74–94 (NAYANVASSFFGAKFQRNIEE) the chain is Periplasmic. The helical transmembrane segment at 95-115 (LLVAPVPTHVIIAGYVGGGVA) threads the bilayer. A topological domain (cytoplasmic) is located at residue Arg116. Residues 117 to 137 (GLFVGILVTAISLFFVPFQVH) traverse the membrane as a helical segment. Residue Ser138 is a topological domain, periplasmic. Residues 139-159 (WVFVALTLVLTAVLFSLAGLL) form a helical membrane-spanning segment. Residues 160–169 (NGVFAKTFDD) lie on the Cytoplasmic side of the membrane. Residues 170–190 (ISLVPTFVLTPLTYLGGVFYS) form a helical membrane-spanning segment. Topologically, residues 191–223 (LTLLPPFWQGLSHLNPIVYMISGFRYGFLGIND) are periplasmic. Residues 224 to 244 (VPLVTTFGVLVVFIVAFYLIC) form a helical membrane-spanning segment. Over 245 to 256 (WSLIQRGRGLRS) the chain is Cytoplasmic.

Belongs to the ABC-2 integral membrane protein family.

It localises to the cell inner membrane. In Escherichia coli O157:H7, this protein is Inner membrane transport permease YadH (yadH).